The chain runs to 208 residues: Imidazole glycerol phosphate synthase subunit HisH (208 aa).

A Glutamine amidotransferase type-1 domain is found at Met1 to Ser206. Cys79 serves as the catalytic Nucleophile. Active-site residues include His181 and Glu183.

Heterodimer of HisH and HisF.

It is found in the cytoplasm. It carries out the reaction 5-[(5-phospho-1-deoxy-D-ribulos-1-ylimino)methylamino]-1-(5-phospho-beta-D-ribosyl)imidazole-4-carboxamide + L-glutamine = D-erythro-1-(imidazol-4-yl)glycerol 3-phosphate + 5-amino-1-(5-phospho-beta-D-ribosyl)imidazole-4-carboxamide + L-glutamate + H(+). The enzyme catalyses L-glutamine + H2O = L-glutamate + NH4(+). It functions in the pathway amino-acid biosynthesis; L-histidine biosynthesis; L-histidine from 5-phospho-alpha-D-ribose 1-diphosphate: step 5/9. In terms of biological role, IGPS catalyzes the conversion of PRFAR and glutamine to IGP, AICAR and glutamate. The HisH subunit catalyzes the hydrolysis of glutamine to glutamate and ammonia as part of the synthesis of IGP and AICAR. The resulting ammonia molecule is channeled to the active site of HisF. This chain is Imidazole glycerol phosphate synthase subunit HisH, found in Listeria monocytogenes serotype 4a (strain HCC23).